The primary structure comprises 299 residues: MKNKNQMKVEKILRLPSWIKFPISKASEFEKMQRLIRKSNIHTICEEGRCPNRAECYASGTATFLLGGSICSRACAFCQVNKGKPSEINKYESIQVAEAVKILNLKYVVLTSVARDDLPDHGANLFVSTINQIRKIDPKIQIEVLTPDLWGGGKSFEDKDKLQKDRLKKILEQRPICFNHNLETVERLQKEVRRGANYKNSIGLLEKAKSIAPNIQTKSGIMLGLGETLKEIETTILDLKKVDCNQITIGQYLRPSLKHLSVKKYWAPKEFEYLKSFCSKLGFKKVSCGPLVRSSYHAG.

Residues C45, C50, C56, C71, C75, C78, and S295 each contribute to the [4Fe-4S] cluster site. Positions 57-284 constitute a Radical SAM core domain; sequence YASGTATFLL…KSFCSKLGFK (228 aa).

This sequence belongs to the radical SAM superfamily. Lipoyl synthase family. The cofactor is [4Fe-4S] cluster.

The protein localises to the cytoplasm. The catalysed reaction is [[Fe-S] cluster scaffold protein carrying a second [4Fe-4S](2+) cluster] + N(6)-octanoyl-L-lysyl-[protein] + 2 oxidized [2Fe-2S]-[ferredoxin] + 2 S-adenosyl-L-methionine + 4 H(+) = [[Fe-S] cluster scaffold protein] + N(6)-[(R)-dihydrolipoyl]-L-lysyl-[protein] + 4 Fe(3+) + 2 hydrogen sulfide + 2 5'-deoxyadenosine + 2 L-methionine + 2 reduced [2Fe-2S]-[ferredoxin]. Its pathway is protein modification; protein lipoylation via endogenous pathway; protein N(6)-(lipoyl)lysine from octanoyl-[acyl-carrier-protein]: step 2/2. Its function is as follows. Catalyzes the radical-mediated insertion of two sulfur atoms into the C-6 and C-8 positions of the octanoyl moiety bound to the lipoyl domains of lipoate-dependent enzymes, thereby converting the octanoylated domains into lipoylated derivatives. The chain is Lipoyl synthase 2 from Prochlorococcus marinus subsp. pastoris (strain CCMP1986 / NIES-2087 / MED4).